A 249-amino-acid polypeptide reads, in one-letter code: Putative TrmH family tRNA/rRNA methyltransferase YacO (249 aa).

Gly198, Leu218, and Leu227 together coordinate S-adenosyl-L-methionine.

It belongs to the class IV-like SAM-binding methyltransferase superfamily. RNA methyltransferase TrmH family.

This Bacillus subtilis (strain 168) protein is Putative TrmH family tRNA/rRNA methyltransferase YacO (yacO).